A 59-amino-acid polypeptide reads, in one-letter code: Large ribosomal subunit protein uL30 (59 aa).

This sequence belongs to the universal ribosomal protein uL30 family. Part of the 50S ribosomal subunit.

The chain is Large ribosomal subunit protein uL30 from Staphylococcus saprophyticus subsp. saprophyticus (strain ATCC 15305 / DSM 20229 / NCIMB 8711 / NCTC 7292 / S-41).